The sequence spans 287 residues: uncharacterized protein (287 aa).

The ATP-grasp domain maps to 115–287 (SLLSKETIKS…KKFLKKKLIS (173 aa)).

This is an uncharacterized protein from Mycoplasma genitalium (strain ATCC 33530 / DSM 19775 / NCTC 10195 / G37) (Mycoplasmoides genitalium).